We begin with the raw amino-acid sequence, 449 residues long: RNA binding protein fox-1 homolog 2 (449 aa).

Low complexity predominate over residues 1 to 21; sequence MAEGGQAQQQPPQLGPGAAAR. The segment at 1–186 is disordered; it reads MAEGGQAQQQ…STPKRLHVSN (186 aa). Composition is skewed to polar residues over residues 77-86 and 118-138; these read QGNQEPTTTP and YAGQ…PHGE. A compositionally biased stretch (low complexity) spans 139 to 176; sequence QSSNSPSNQNGSLTQTEGGAQTDGQQSQTQSSENSESK. In terms of domain architecture, RRM spans 180–256; it reads KRLHVSNIPF…RKIEVNNATA (77 aa). Omega-N-methylarginine is present on residues Arg236, Gly241, Tyr268, and Lys273. Glu285 and Pro317 each carry asymmetric dimethylarginine. Residues Leu318, Leu323, Ala336, Arg340, and Gly341 each carry the omega-N-methylarginine modification. Residues Arg356 and Arg388 each carry the asymmetric dimethylarginine modification. Asymmetric dimethylarginine; alternate is present on residues Arg440 and Arg445. Omega-N-methylarginine; alternate occurs at positions 440 and 445.

In terms of assembly, interacts with ER-alpha N-terminal activation domain. Interacts with RBPMS; the interaction allows cooperative assembly of stable cell-specific alternative splicing regulatory complexes. In terms of tissue distribution, detected in brain neurons (at protein level). Detected in heart, brain, embryo, lung, liver, kidney and ovary.

It localises to the nucleus. Its subcellular location is the cytoplasm. Its function is as follows. RNA-binding protein that regulates alternative splicing events by binding to 5'-UGCAUGU-3' elements. Prevents binding of U2AF2 to the 3'-splice site. Regulates alternative splicing of tissue-specific exons and of differentially spliced exons during erythropoiesis. Seems to act as a coregulatory factor of ER-alpha. Together with RNA binding proteins RBPMS and MBNL1/2, activates vascular smooth muscle cells alternative splicing events. This chain is RNA binding protein fox-1 homolog 2 (Rbfox2), found in Mus musculus (Mouse).